A 347-amino-acid chain; its full sequence is GTP 3',8-cyclase (347 aa).

Positions 10–242 (RLNRPIGVLR…ERINARWPLE (233 aa)) constitute a Radical SAM core domain. Arg19 provides a ligand contact to GTP. Positions 26 and 30 each coordinate [4Fe-4S] cluster. S-adenosyl-L-methionine is bound at residue Tyr32. Cys33 contacts [4Fe-4S] cluster. Arg65 contributes to the GTP binding site. Gly69 is an S-adenosyl-L-methionine binding site. A GTP-binding site is contributed by Thr104. Ser129 is an S-adenosyl-L-methionine binding site. Lys178 serves as a coordination point for GTP. Met212 contributes to the S-adenosyl-L-methionine binding site. 2 residues coordinate [4Fe-4S] cluster: Cys275 and Cys278. 280-282 (RLR) provides a ligand contact to GTP. Cys292 is a [4Fe-4S] cluster binding site.

It belongs to the radical SAM superfamily. MoaA family. As to quaternary structure, monomer and homodimer. [4Fe-4S] cluster is required as a cofactor.

It catalyses the reaction GTP + AH2 + S-adenosyl-L-methionine = (8S)-3',8-cyclo-7,8-dihydroguanosine 5'-triphosphate + 5'-deoxyadenosine + L-methionine + A + H(+). The protein operates within cofactor biosynthesis; molybdopterin biosynthesis. Functionally, catalyzes the cyclization of GTP to (8S)-3',8-cyclo-7,8-dihydroguanosine 5'-triphosphate. The protein is GTP 3',8-cyclase of Synechococcus sp. (strain CC9605).